Here is a 397-residue protein sequence, read N- to C-terminus: Succinyl-diaminopimelate desuccinylase (397 aa).

H73 is a binding site for Zn(2+). Residue D75 is part of the active site. D106 is a Zn(2+) binding site. Catalysis depends on E140, which acts as the Proton acceptor. Residues E141, E169, and H366 each coordinate Zn(2+).

The protein belongs to the peptidase M20A family. DapE subfamily. In terms of assembly, homodimer. Zn(2+) is required as a cofactor. The cofactor is Co(2+).

The enzyme catalyses N-succinyl-(2S,6S)-2,6-diaminopimelate + H2O = (2S,6S)-2,6-diaminopimelate + succinate. It functions in the pathway amino-acid biosynthesis; L-lysine biosynthesis via DAP pathway; LL-2,6-diaminopimelate from (S)-tetrahydrodipicolinate (succinylase route): step 3/3. Its function is as follows. Catalyzes the hydrolysis of N-succinyl-L,L-diaminopimelic acid (SDAP), forming succinate and LL-2,6-diaminopimelate (DAP), an intermediate involved in the bacterial biosynthesis of lysine and meso-diaminopimelic acid, an essential component of bacterial cell walls. This is Succinyl-diaminopimelate desuccinylase from Rhizobium etli (strain ATCC 51251 / DSM 11541 / JCM 21823 / NBRC 15573 / CFN 42).